The sequence spans 239 residues: MKNDVISPEFDENGRPLRRIRSFVRRQGRLTKGQEHALENYWPVMGVEFSEDMLDFPALFGREAPVTLEIGFGMGASLVAMAKDRPEQDFLGIEVHSPGVGACLASAHEEGLSNLRVMCHDAVEVLHKMIPDNSLRMVQLFFPDPWHKARHNKRRIVQVPFAELVKSKLQLGGVFHMATDWEPYAEHMLEVMSSIDGYKNLSESNDYVPRPASRPVTKFEQRGHRLGHGVWDLMFERVK.

Residues glutamate 69, glutamate 94, aspartate 121, and aspartate 144 each contribute to the S-adenosyl-L-methionine site. The active site involves aspartate 144. Lysine 148 serves as a coordination point for substrate. The interval 150–155 is interaction with RNA; that stretch reads RHNKRR. Substrate-binding positions include aspartate 180 and 217 to 220; that span reads TKFE.

This sequence belongs to the class I-like SAM-binding methyltransferase superfamily. TrmB family. In terms of assembly, monomer.

The enzyme catalyses guanosine(46) in tRNA + S-adenosyl-L-methionine = N(7)-methylguanosine(46) in tRNA + S-adenosyl-L-homocysteine. The protein operates within tRNA modification; N(7)-methylguanine-tRNA biosynthesis. In terms of biological role, catalyzes the formation of N(7)-methylguanine at position 46 (m7G46) in tRNA. The protein is tRNA (guanine-N(7)-)-methyltransferase of Shigella flexneri serotype 5b (strain 8401).